The sequence spans 106 residues: Malonate decarboxylase acyl carrier protein (106 aa).

O-(phosphoribosyl dephospho-coenzyme A)serine is present on serine 28.

The protein belongs to the MdcC family. Covalently binds the prosthetic group of malonate decarboxylase.

It localises to the cytoplasm. Subunit of malonate decarboxylase, it is an acyl carrier protein to which acetyl and malonyl thioester residues are bound via a 2'-(5''-phosphoribosyl)-3'-dephospho-CoA prosthetic group and turn over during the catalytic mechanism. The protein is Malonate decarboxylase acyl carrier protein of Stenotrophomonas maltophilia (strain R551-3).